A 146-amino-acid polypeptide reads, in one-letter code: Ferredoxin-thioredoxin reductase catalytic chain, chloroplastic (146 aa).

The N-terminal 31 residues, 1–31, are a transit peptide targeting the chloroplast; the sequence is MNLQAVSCSFGFLSSPLGVTPRTSFRRFVIR. Position 85 (Cys-85) interacts with [4Fe-4S] cluster. Catalysis depends on Cys-87, which acts as the Nucleophile. Cys-87 and Cys-117 form a disulfide bridge. Positions 104, 106, and 115 each coordinate [4Fe-4S] cluster.

Belongs to the ferredoxin thioredoxin reductase beta subunit family. As to quaternary structure, heterodimer of subunit A (variable subunit) and subunit B (catalytic subunit). Heterodimeric FTR forms a complex with ferredoxin and thioredoxin. [4Fe-4S] cluster serves as cofactor.

Its subcellular location is the plastid. The protein localises to the chloroplast. The enzyme catalyses [thioredoxin]-disulfide + 2 reduced [2Fe-2S]-[ferredoxin] + 2 H(+) = [thioredoxin]-dithiol + 2 oxidized [2Fe-2S]-[ferredoxin]. Catalytic subunit of the ferredoxin-thioredoxin reductase (FTR), which catalyzes the two-electron reduction of thioredoxins by the electrons provided by reduced ferredoxin. This Arabidopsis thaliana (Mouse-ear cress) protein is Ferredoxin-thioredoxin reductase catalytic chain, chloroplastic.